Reading from the N-terminus, the 180-residue chain is ATP synthase subunit delta (180 aa).

This sequence belongs to the ATPase delta chain family. In terms of assembly, F-type ATPases have 2 components, F(1) - the catalytic core - and F(0) - the membrane proton channel. F(1) has five subunits: alpha(3), beta(3), gamma(1), delta(1), epsilon(1). F(0) has three main subunits: a(1), b(2) and c(10-14). The alpha and beta chains form an alternating ring which encloses part of the gamma chain. F(1) is attached to F(0) by a central stalk formed by the gamma and epsilon chains, while a peripheral stalk is formed by the delta and b chains.

The protein resides in the cell membrane. In terms of biological role, f(1)F(0) ATP synthase produces ATP from ADP in the presence of a proton or sodium gradient. F-type ATPases consist of two structural domains, F(1) containing the extramembraneous catalytic core and F(0) containing the membrane proton channel, linked together by a central stalk and a peripheral stalk. During catalysis, ATP synthesis in the catalytic domain of F(1) is coupled via a rotary mechanism of the central stalk subunits to proton translocation. Its function is as follows. This protein is part of the stalk that links CF(0) to CF(1). It either transmits conformational changes from CF(0) to CF(1) or is implicated in proton conduction. The chain is ATP synthase subunit delta from Leuconostoc citreum (strain KM20).